A 210-amino-acid chain; its full sequence is MARALLGTKVGMTQIWSGRRVVPVTAVAVTTNVVSQVKAPEKDGYSRLQIATGAIDPRRVNRPRKGHFAKAGLTPRRFIREVDSEGSLGDEFGPEIFQEGQLVDVVGKSKGKGFSGTMKRHNFQGVSATHGSHRNHRKPGSVGASSTPSRVFKGTRMAGRLGSSRVTVHNLRLVKIDSENGLLLVEGAVPGSSGSPVIIRDAVKGVPIVS.

The segment at 126–150 is disordered; it reads VSATHGSHRNHRKPGSVGASSTPSR.

The protein belongs to the universal ribosomal protein uL3 family. In terms of assembly, part of the 50S ribosomal subunit. Forms a cluster with proteins L14 and L19.

Its function is as follows. One of the primary rRNA binding proteins, it binds directly near the 3'-end of the 23S rRNA, where it nucleates assembly of the 50S subunit. This Tropheryma whipplei (strain TW08/27) (Whipple's bacillus) protein is Large ribosomal subunit protein uL3.